Here is an 886-residue protein sequence, read N- to C-terminus: Kinesin-like protein KIF18A (886 aa).

A Kinesin motor domain is found at 11–355; it reads RMKVVVRVRP…LKYANRAKEI (345 aa). K24 participates in a covalent cross-link: Glycyl lysine isopeptide (Lys-Gly) (interchain with G-Cter in SUMO2). 113-120 contributes to the ATP binding site; sequence GATGSGKT. The stretch at 370-404 forms a coiled coil; that stretch reads ISQYVKICNMQKAEILMLKEKLKAYEEQKALSDRN. At S674 the chain carries Phosphoserine. K683 is covalently cross-linked (Glycyl lysine isopeptide (Lys-Gly) (interchain with G-Cter in SUMO2)). S695 is modified (phosphoserine). Residues 774 to 804 form a disordered region; sequence EQEPLASSKSSVHRIESSSFSTKDSMPESAG. K782 participates in a covalent cross-link: Glycyl lysine isopeptide (Lys-Gly) (interchain with G-Cter in SUMO2). S826 carries the post-translational modification Phosphoserine. K862 is covalently cross-linked (Glycyl lysine isopeptide (Lys-Gly) (interchain with G-Cter in SUMO2)). Residues 862-886 form a disordered region; it reads KRNTNKTNSNMLRKFRRNTSKENVQ.

The protein belongs to the TRAFAC class myosin-kinesin ATPase superfamily. Kinesin family. In terms of assembly, interacts with CENPE and ESR1. Post-translationally, glycosylated. In terms of processing, ubiquitinated.

It localises to the cell projection. The protein localises to the ruffle. It is found in the cytoplasm. The protein resides in the nucleus. Its subcellular location is the cytoskeleton. It localises to the microtubule organizing center. The protein localises to the centrosome. In terms of biological role, microtubule-depolymerizing kinesin which plays a role in chromosome congression by reducing the amplitude of preanaphase oscillations and slowing poleward movement during anaphase, thus suppressing chromosome movements. May stabilize the CENPE-BUB1B complex at the kinetochores during early mitosis and maintains CENPE levels at kinetochores during chromosome congression. The protein is Kinesin-like protein KIF18A (Kif18a) of Mus musculus (Mouse).